Reading from the N-terminus, the 340-residue chain is Sesquiterpene synthase 6 (340 aa).

The Mg(2+) site is built by D90, N229, S233, and E237. Residues D90–D94 carry the DDXXD motif motif. An NSE/DTE motif motif is present at residues N229–E237. R316 and Y317 together coordinate (2E,6E)-farnesyl diphosphate.

It belongs to the terpene synthase family. Requires Mg(2+) as cofactor.

The enzyme catalyses (2E,6E)-farnesyl diphosphate = delta-cadinene + diphosphate. The catalysed reaction is (2E,6E)-farnesyl diphosphate = bicyclogermacrene + diphosphate. Its function is as follows. Terpene cyclase that catalyzes the cyclization of farnesyl diphosphate (FPP) to various sesquiterpenes, including bicycloelemene, alpha-gurjunene, 9-epi-caryophylene, bicyclosesquiphellandrene, bicyclogermacrene and delta-cadinene. The sequence is that of Sesquiterpene synthase 6 from Postia placenta (strain ATCC 44394 / Madison 698-R) (Brown rot fungus).